A 436-amino-acid chain; its full sequence is Serine--tRNA ligase (436 aa).

239 to 241 serves as a coordination point for L-serine; it reads TAE. 270 to 272 contributes to the ATP binding site; that stretch reads RKE. Glu293 contributes to the L-serine binding site. 357–360 provides a ligand contact to ATP; it reads EISS. Ser392 contacts L-serine.

This sequence belongs to the class-II aminoacyl-tRNA synthetase family. Type-1 seryl-tRNA synthetase subfamily. In terms of assembly, homodimer. The tRNA molecule binds across the dimer.

The protein resides in the cytoplasm. It catalyses the reaction tRNA(Ser) + L-serine + ATP = L-seryl-tRNA(Ser) + AMP + diphosphate + H(+). The enzyme catalyses tRNA(Sec) + L-serine + ATP = L-seryl-tRNA(Sec) + AMP + diphosphate + H(+). It functions in the pathway aminoacyl-tRNA biosynthesis; selenocysteinyl-tRNA(Sec) biosynthesis; L-seryl-tRNA(Sec) from L-serine and tRNA(Sec): step 1/1. Functionally, catalyzes the attachment of serine to tRNA(Ser). Is also able to aminoacylate tRNA(Sec) with serine, to form the misacylated tRNA L-seryl-tRNA(Sec), which will be further converted into selenocysteinyl-tRNA(Sec). The protein is Serine--tRNA ligase of Leuconostoc citreum (strain KM20).